A 124-amino-acid chain; its full sequence is Glutaredoxin-2 (124 aa).

An intrachain disulfide couples C13 to C16.

The protein belongs to the glutaredoxin family. In terms of assembly, homodimer.

The protein localises to the host cytoplasm. Glutaredoxin necessary for virion morphogenesis and virus replication. Functions as a thiol-disulfide transfer protein between membrane-associated OPG128 and substrates OPG095 or OPG053. The complete pathway for formation of disulfide bonds in intracellular virion membrane proteins sequentially involves oxidation of OPG072, OPG128 and OPG088. Exhibit thioltransferase and dehydroascorbate reductase activities in vitro. This chain is Glutaredoxin-2 (OPG088), found in Homo sapiens (Human).